Here is a 371-residue protein sequence, read N- to C-terminus: MILKRISILNYKNLEQAELEFSPKMNCFIGQNGMGKTNLLDAVYYLSFCKSATNPIDSQNIRHEGEFFVIQGFYETDQGEPEEVYCGLKRRQKKQFKRNKKEYNRLSDHIGFIPLVMVSPADAELIAGGSDGRRRFMDVVISQYDKEYLDALIRYNKALTQRNALLKSEQEFDEELMLVWEEMMASAGEVVFKKRSEFIAEFIPTFQSFYSYISQDKEKVNLAYESHAMSGGLLDIIKESRRRDRVMGYSLKGVHKDDLIMQLGDFPIKREGSQGQNKTYLIALKLAQFDFLKKTGGNTTPLLLLDDIFDKLDAFRVEQIVKLVAGDRFGQIFITDTNRDHLDKILKKIEREYKVFAVEDGEVTERKEMAE.

An ATP-binding site is contributed by 30-37 (GQNGMGKT).

This sequence belongs to the RecF family.

It localises to the cytoplasm. The RecF protein is involved in DNA metabolism; it is required for DNA replication and normal SOS inducibility. RecF binds preferentially to single-stranded, linear DNA. It also seems to bind ATP. The polypeptide is DNA replication and repair protein RecF (Phocaeicola vulgatus (strain ATCC 8482 / DSM 1447 / JCM 5826 / CCUG 4940 / NBRC 14291 / NCTC 11154) (Bacteroides vulgatus)).